Consider the following 91-residue polypeptide: Probable Fe(2+)-trafficking protein (91 aa).

The protein belongs to the Fe(2+)-trafficking protein family.

Functionally, could be a mediator in iron transactions between iron acquisition and iron-requiring processes, such as synthesis and/or repair of Fe-S clusters in biosynthetic enzymes. The polypeptide is Probable Fe(2+)-trafficking protein (Ralstonia pickettii (strain 12J)).